The primary structure comprises 51 residues: Large ribosomal subunit protein eL40 (51 aa).

It belongs to the eukaryotic ribosomal protein eL40 family.

The polypeptide is Large ribosomal subunit protein eL40 (Thermofilum pendens (strain DSM 2475 / Hrk 5)).